The chain runs to 179 residues: Crossover junction endodeoxyribonuclease RuvC (179 aa).

Active-site residues include D14, E74, and D147. Mg(2+)-binding residues include D14, E74, and D147.

This sequence belongs to the RuvC family. In terms of assembly, homodimer which binds Holliday junction (HJ) DNA. The HJ becomes 2-fold symmetrical on binding to RuvC with unstacked arms; it has a different conformation from HJ DNA in complex with RuvA. In the full resolvosome a probable DNA-RuvA(4)-RuvB(12)-RuvC(2) complex forms which resolves the HJ. Mg(2+) serves as cofactor.

The protein localises to the cytoplasm. The enzyme catalyses Endonucleolytic cleavage at a junction such as a reciprocal single-stranded crossover between two homologous DNA duplexes (Holliday junction).. The RuvA-RuvB-RuvC complex processes Holliday junction (HJ) DNA during genetic recombination and DNA repair. Endonuclease that resolves HJ intermediates. Cleaves cruciform DNA by making single-stranded nicks across the HJ at symmetrical positions within the homologous arms, yielding a 5'-phosphate and a 3'-hydroxyl group; requires a central core of homology in the junction. The consensus cleavage sequence is 5'-(A/T)TT(C/G)-3'. Cleavage occurs on the 3'-side of the TT dinucleotide at the point of strand exchange. HJ branch migration catalyzed by RuvA-RuvB allows RuvC to scan DNA until it finds its consensus sequence, where it cleaves and resolves the cruciform DNA. In Rubrobacter xylanophilus (strain DSM 9941 / JCM 11954 / NBRC 16129 / PRD-1), this protein is Crossover junction endodeoxyribonuclease RuvC.